Here is a 2623-residue protein sequence, read N- to C-terminus: Immunoglobulin superfamily member 10 (2623 aa).

An N-terminal signal peptide occupies residues 1–28 (MKVKGRGITCLLVSFAVICLVATPGGKA). The LRRNT domain occupies 29-56 (CPRRCACYMPTEVHCTFRYLTSIPDSIP). 6 LRR repeats span residues 58 to 79 (NVER…DFSG), 82 to 103 (KLEL…TFSD), 106 to 127 (ALQV…TFYG), 130 to 151 (SLTR…VFYG), 154 to 175 (FLRL…TFVS), and 186 to 207 (FIKF…MVSY). The region spanning 219-281 (NPWTCDCHLK…VSAAAFQCAK (63 aa)) is the LRRCT domain. 2 N-linked (GlcNAc...) asparagine glycosylation sites follow: asparagine 319 and asparagine 439. Ig-like C2-type domains follow at residues 461-567 (PRAE…YRIT) and 571-661 (PLVE…FQVS). Intrachain disulfides connect cysteine 497-cysteine 551 and cysteine 595-cysteine 645. Asparagine 627 carries N-linked (GlcNAc...) asparagine glycosylation. Disordered stretches follow at residues 668–692 (RPLE…HLKE) and 767–788 (AMPD…QLPN). Asparagine 774 and asparagine 999 each carry an N-linked (GlcNAc...) asparagine glycan. Disordered stretches follow at residues 1334-1376 (TQTE…AMTP) and 1434-1453 (STIA…TTTR). The segment covering 1335 to 1356 (QTERSRAQTIQREQEPQKKNRT) has biased composition (basic and acidic residues). Positions 1357-1373 (DPNISPDQSSGFTTPTA) are enriched in polar residues. 10 Ig-like C2-type domains span residues 1648–1739 (PRIV…VTLS), 1745–1836 (PRIL…VKIQ), 1841–1933 (PPVI…VMLT), 1941–2034 (PRIE…VSLR), 2037–2135 (PAKI…VHLT), 2141–2229 (PRIR…YKLD), 2234–2331 (PPLI…LEVL), 2337–2427 (PTFR…VILE), 2432–2518 (PVIL…TLIT), and 2528–2623 (PRIT…IQVI). 3 cysteine pairs are disulfide-bonded: cysteine 1670–cysteine 1723, cysteine 1767–cysteine 1820, and cysteine 1864–cysteine 1917. Residues asparagine 1899 and asparagine 1962 are each glycosylated (N-linked (GlcNAc...) asparagine). 7 disulfide bridges follow: cysteine 1963/cysteine 2016, cysteine 2060/cysteine 2119, cysteine 2163/cysteine 2213, cysteine 2261/cysteine 2313, cysteine 2359/cysteine 2411, cysteine 2454/cysteine 2506, and cysteine 2550/cysteine 2605. Asparagine 2101 carries N-linked (GlcNAc...) asparagine glycosylation. The residue at position 2603 (tyrosine 2603) is a Phosphotyrosine.

It is found in the secreted. Functionally, involved in the control of early migration of neurons expressing gonadotropin-releasing hormone (GNRH neurons). May be involved in the maintenance of osteochondroprogenitor cells pool. The protein is Immunoglobulin superfamily member 10 (IGSF10) of Homo sapiens (Human).